The following is a 449-amino-acid chain: 4-aminobutyrate aminotransferase (449 aa).

Position 294 is an N6-(pyridoxal phosphate)lysine (Lys-294).

This sequence belongs to the class-III pyridoxal-phosphate-dependent aminotransferase family. Requires pyridoxal 5'-phosphate as cofactor.

The enzyme catalyses 4-aminobutanoate + 2-oxoglutarate = succinate semialdehyde + L-glutamate. The catalysed reaction is (S)-3-amino-2-methylpropanoate + 2-oxoglutarate = 2-methyl-3-oxopropanoate + L-glutamate. It participates in amino-acid degradation; 4-aminobutanoate degradation. This chain is 4-aminobutyrate aminotransferase (gabT), found in Mycobacterium bovis (strain ATCC BAA-935 / AF2122/97).